A 640-amino-acid chain; its full sequence is 1,4-alpha-glucan branching enzyme GlgB (640 aa).

Aspartate 317 serves as the catalytic Nucleophile. Residue glutamate 370 is the Proton donor of the active site.

This sequence belongs to the glycosyl hydrolase 13 family. GlgB subfamily. Monomer.

The catalysed reaction is Transfers a segment of a (1-&gt;4)-alpha-D-glucan chain to a primary hydroxy group in a similar glucan chain.. It functions in the pathway glycan biosynthesis; glycogen biosynthesis. Functionally, catalyzes the formation of the alpha-1,6-glucosidic linkages in glycogen by scission of a 1,4-alpha-linked oligosaccharide from growing alpha-1,4-glucan chains and the subsequent attachment of the oligosaccharide to the alpha-1,6 position. The sequence is that of 1,4-alpha-glucan branching enzyme GlgB from Nitratidesulfovibrio vulgaris (strain ATCC 29579 / DSM 644 / CCUG 34227 / NCIMB 8303 / VKM B-1760 / Hildenborough) (Desulfovibrio vulgaris).